We begin with the raw amino-acid sequence, 856 residues long: Alanine/arginine aminopeptidase (856 aa).

Residues Glu132 and 264–268 (GAMEN) each bind substrate. Residue His300 coordinates Zn(2+). Residue Glu301 is the Proton acceptor of the active site. Zn(2+) is bound by residues His304 and Glu323.

It belongs to the peptidase M1 family. Zn(2+) is required as a cofactor.

Its function is as follows. Positive effector of glycogen accumulation. May be involved in nutrient-sensing. The sequence is that of Alanine/arginine aminopeptidase (AAP1) from Saccharomyces cerevisiae (strain ATCC 204508 / S288c) (Baker's yeast).